Consider the following 251-residue polypeptide: tRNA pseudouridine synthase A 1 (251 aa).

Catalysis depends on aspartate 52, which acts as the Nucleophile. Tyrosine 110 contributes to the substrate binding site.

Belongs to the tRNA pseudouridine synthase TruA family. As to quaternary structure, homodimer.

The enzyme catalyses uridine(38/39/40) in tRNA = pseudouridine(38/39/40) in tRNA. Formation of pseudouridine at positions 38, 39 and 40 in the anticodon stem and loop of transfer RNAs. This is tRNA pseudouridine synthase A 1 from Desulfotalea psychrophila (strain LSv54 / DSM 12343).